A 415-amino-acid polypeptide reads, in one-letter code: MANPKSLSLFLLSLLAIASAEVFFEERFEDGWENRWVKSDWKKDENTAGEWNYTSGKWNGDPNDKGIQTSEDYRFYAISAEFPEFSNKDKTLVFQFSVKHEQKLDCGGGYMKLLSSSTDQKKFGGDTPYSIMFGPDICGYSTKKVHAILNYNDTNHLIKKEVPCETDQLTHVYTLVIRPDATYSILIDNVEKQTGSLYTDWDLLPPKKIKDPEAKKPEDWDEKEYIPDPEDKKPEGYDDIPKEIPDPDAKKPEDWDDEEDGEWTAPTIANPEYKGPWKPKKIKNPNYKGKWKAPMIDNPDFKDDPEIYVYPNLKYVGIELWQVKSGTLFDNVLICNDPEYAKQLAEETWGKNKDAEKAAFEEAEKKKEEEESKDDPADSDADEDDDDADDTEGEDDGESKSDAAEDSAEDVHDEL.

The signal sequence occupies residues methionine 1–alanine 20. A glycan (N-linked (GlcNAc...) asparagine) is linked at asparagine 52. A disulfide bond links cysteine 106 and cysteine 138. The an alpha-D-glucoside site is built by tyrosine 110, lysine 112, tyrosine 129, and aspartate 136. Asparagine 152 is a glycosylation site (N-linked (GlcNAc...) asparagine). 7 tandem repeats follow at residues lysine 192–leucine 203, aspartate 211–glutamate 222, aspartate 228–aspartate 239, aspartate 246–aspartate 257, glycine 261–proline 271, glycine 275–proline 285, and glycine 289–proline 299. The segment at lysine 192–aspartate 257 is 4 X approximate repeats. Positions lysine 208–glutamate 253 are enriched in basic and acidic residues. Residues lysine 208–proline 276 are disordered. The tract at residues glycine 261–proline 299 is 3 X approximate repeats. Glutamate 319 serves as a coordination point for an alpha-D-glucoside. The span at glutamate 347–proline 376 shows a compositional bias: basic and acidic residues. Positions glutamate 347–leucine 415 are disordered. 2 stretches are compositionally biased toward acidic residues: residues alanine 377–glycine 397 and alanine 404–leucine 415. The Prevents secretion from ER motif lies at histidine 412–leucine 415.

Belongs to the calreticulin family.

The protein localises to the endoplasmic reticulum lumen. Molecular calcium-binding chaperone promoting folding, oligomeric assembly and quality control in the ER via the calreticulin/calnexin cycle. This lectin may interact transiently with almost all of the monoglucosylated glycoproteins that are synthesized in the ER. The chain is Calreticulin from Ricinus communis (Castor bean).